Here is a 103-residue protein sequence, read N- to C-terminus: Small ribosomal subunit protein uS10 (103 aa).

The protein belongs to the universal ribosomal protein uS10 family. As to quaternary structure, part of the 30S ribosomal subunit.

Involved in the binding of tRNA to the ribosomes. The protein is Small ribosomal subunit protein uS10 of Neisseria gonorrhoeae (strain NCCP11945).